The sequence spans 220 residues: MTIHKEGYRSLFYVSAFLFLLNFLIYYFFPEASILQKTVLVISLLIFLVVLQFFRNPSRTIEINDNQIIAPADGKVVVIEEVIETEYFNEKRRQISIFMSPFNVHSNRNAVSGIVKFFKYHPGKFLVAWHPKSSTENERTTTVVQTKNNEQILMRQIAGALARRIVWYIDENSKVTQGEEFGFIKFGSRVDLFIPLDAKVKVSLNQTTVGGKTVIAEFYS.

The active-site Schiff-base intermediate with substrate; via pyruvic acid is the Ser-188. The residue at position 188 (Ser-188) is a Pyruvic acid (Ser); by autocatalysis.

Belongs to the phosphatidylserine decarboxylase family. PSD-A subfamily. As to quaternary structure, heterodimer of a large membrane-associated beta subunit and a small pyruvoyl-containing alpha subunit. The cofactor is pyruvate. Post-translationally, is synthesized initially as an inactive proenzyme. Formation of the active enzyme involves a self-maturation process in which the active site pyruvoyl group is generated from an internal serine residue via an autocatalytic post-translational modification. Two non-identical subunits are generated from the proenzyme in this reaction, and the pyruvate is formed at the N-terminus of the alpha chain, which is derived from the carboxyl end of the proenzyme. The post-translation cleavage follows an unusual pathway, termed non-hydrolytic serinolysis, in which the side chain hydroxyl group of the serine supplies its oxygen atom to form the C-terminus of the beta chain, while the remainder of the serine residue undergoes an oxidative deamination to produce ammonia and the pyruvoyl prosthetic group on the alpha chain.

The protein resides in the cell membrane. The catalysed reaction is a 1,2-diacyl-sn-glycero-3-phospho-L-serine + H(+) = a 1,2-diacyl-sn-glycero-3-phosphoethanolamine + CO2. It participates in phospholipid metabolism; phosphatidylethanolamine biosynthesis; phosphatidylethanolamine from CDP-diacylglycerol: step 2/2. In terms of biological role, catalyzes the formation of phosphatidylethanolamine (PtdEtn) from phosphatidylserine (PtdSer). This chain is Phosphatidylserine decarboxylase proenzyme, found in Cytophaga hutchinsonii (strain ATCC 33406 / DSM 1761 / CIP 103989 / NBRC 15051 / NCIMB 9469 / D465).